The sequence spans 184 residues: Probable N-acetyltransferase san (184 aa).

The N-acetyltransferase domain maps to 6 to 155 (IELGDVTPHN…DAHVLQKTLR (150 aa)). Tyrosine 31 serves as a coordination point for substrate. Lysine 47 carries the N6-acetyllysine; by autocatalysis modification. Tyrosine 73 is a catalytic residue. Residue methionine 75 coordinates substrate. Position 77 to 90 (77 to 90 (LGCLSPYRRLGIGT)) interacts with acetyl-CoA. Histidine 112 is an active-site residue. Residue 117 to 126 (NNGAIEFYKK) coordinates CoA. Residues 138 to 141 (YYKR) form a substrate region. Over residues 157-174 (TAPNSNSTATSTTANSNS) the composition is skewed to low complexity. The disordered stretch occupies residues 157–176 (TAPNSNSTATSTTANSNSRS).

The protein belongs to the acetyltransferase family. Component of an acetyltransferase complex, at least composed of san, Ard1 and Nat1. In terms of processing, autoacetylated.

Its subcellular location is the cytoplasm. It catalyses the reaction N-terminal L-methionyl-L-alanyl-[protein] + acetyl-CoA = N-terminal N(alpha)-acetyl-L-methionyl-L-alanyl-[protein] + CoA + H(+). The catalysed reaction is N-terminal L-methionyl-L-seryl-[protein] + acetyl-CoA = N-terminal N(alpha)-acetyl-L-methionyl-L-seryl-[protein] + CoA + H(+). The enzyme catalyses N-terminal L-methionyl-L-valyl-[protein] + acetyl-CoA = N-terminal N(alpha)-acetyl-L-methionyl-L-valyl-[protein] + CoA + H(+). It carries out the reaction N-terminal L-methionyl-L-threonyl-[protein] + acetyl-CoA = N-terminal N(alpha)-acetyl-L-methionyl-L-threonyl-[protein] + CoA + H(+). It catalyses the reaction N-terminal L-methionyl-L-lysyl-[protein] + acetyl-CoA = N-terminal N(alpha)-acetyl-L-methionyl-L-lysyl-[protein] + CoA + H(+). The catalysed reaction is N-terminal L-methionyl-L-leucyl-[protein] + acetyl-CoA = N-terminal N(alpha)-acetyl-L-methionyl-L-leucyl-[protein] + CoA + H(+). The enzyme catalyses N-terminal L-methionyl-L-phenylalanyl-[protein] + acetyl-CoA = N-terminal N(alpha)-acetyl-L-methionyl-L-phenylalanyl-[protein] + CoA + H(+). It carries out the reaction N-terminal L-methionyl-L-tyrosyl-[protein] + acetyl-CoA = N-terminal N(alpha)-acetyl-L-methionyl-L-tyrosyl-[protein] + CoA + H(+). Its function is as follows. N-alpha-acetyltransferase that acetylates the N-terminus of proteins that retain their initiating methionine. Has a broad substrate specificity: able to acetylate the initiator methionine of most peptides. Also displays N-epsilon-acetyltransferase activity by mediating acetylation of the side chain of specific lysines on proteins. Autoacetylates. Required for the establishment of sister chromatid cohesion and couple the processes of cohesion and DNA replication to ensure that only sister chromatids become paired together. Required for the interaction between Scc1/vtd and SMC3, possibly by mediating N-terminal acetylation of Scc1/vtd. In terms of biological role, (Microbial infection) Required for optimal replication of E.chaffeensis in the immune tissues, hemocytes, and fat body. This Drosophila melanogaster (Fruit fly) protein is Probable N-acetyltransferase san (san).